We begin with the raw amino-acid sequence, 180 residues long: Large ribosomal subunit protein uL18m (180 aa).

It belongs to the universal ribosomal protein uL18 family. As to quaternary structure, component of the mitochondrial large ribosomal subunit (mt-LSU). Mature mammalian 55S mitochondrial ribosomes consist of a small (28S) and a large (39S) subunit. The 28S small subunit contains a 12S ribosomal RNA (12S mt-rRNA) and 30 different proteins. The 39S large subunit contains a 16S rRNA (16S mt-rRNA), a copy of mitochondrial valine transfer RNA (mt-tRNA(Val)), which plays an integral structural role, and 52 different proteins.

Its subcellular location is the mitochondrion. Functionally, together with thiosulfate sulfurtransferase (TST), acts as a mitochondrial import factor for the cytosolic 5S rRNA. The precursor form shows RNA chaperone activity; is able to fold the 5S rRNA into an import-competent conformation that is recognized by rhodanese (TST). Both the cytoplasmic and mitochondrial forms are able to bind to the helix IV-loop D in the gamma domain of the 5S rRNA. This chain is Large ribosomal subunit protein uL18m (MRPL18), found in Homo sapiens (Human).